The following is a 586-amino-acid chain: Eukaryotic translation initiation factor 3 subunit D (586 aa).

Disordered regions lie at residues 16–37 (EDSWGPATPSDNMLEGVPYAPF) and 104–176 (KRTF…REPS). The span at 108–131 (GRGGGTVFRGRAQRGGAGQRGGRA) shows a compositional bias: gly residues. Basic and acidic residues predominate over residues 162–174 (GWKDYDKPQRTRE). The tract at residues 301-315 (SIDLVTVNENAADAP) is RNA gate. Residues 563 to 586 (ANTFEEDDEAADEQEEKATEESEE) are disordered. A compositionally biased stretch (acidic residues) spans 566 to 577 (FEEDDEAADEQE).

The protein belongs to the eIF-3 subunit D family. As to quaternary structure, component of the eukaryotic translation initiation factor 3 (eIF-3) complex.

Its subcellular location is the cytoplasm. Functionally, mRNA cap-binding component of the eukaryotic translation initiation factor 3 (eIF-3) complex, which is involved in protein synthesis of a specialized repertoire of mRNAs and, together with other initiation factors, stimulates binding of mRNA and methionyl-tRNAi to the 40S ribosome. The eIF-3 complex specifically targets and initiates translation of a subset of mRNAs involved in cell proliferation. In the eIF-3 complex, eif3d specifically recognizes and binds the 7-methylguanosine cap of a subset of mRNAs. This Aspergillus clavatus (strain ATCC 1007 / CBS 513.65 / DSM 816 / NCTC 3887 / NRRL 1 / QM 1276 / 107) protein is Eukaryotic translation initiation factor 3 subunit D.